Here is a 174-residue protein sequence, read N- to C-terminus: Peptide deformylase (174 aa).

2 residues coordinate Fe cation: Cys94 and His136. The active site involves Glu137. His140 is a binding site for Fe cation.

Belongs to the polypeptide deformylase family. The cofactor is Fe(2+).

It carries out the reaction N-terminal N-formyl-L-methionyl-[peptide] + H2O = N-terminal L-methionyl-[peptide] + formate. Removes the formyl group from the N-terminal Met of newly synthesized proteins. Requires at least a dipeptide for an efficient rate of reaction. N-terminal L-methionine is a prerequisite for activity but the enzyme has broad specificity at other positions. The chain is Peptide deformylase from Rhizobium meliloti (strain 1021) (Ensifer meliloti).